A 286-amino-acid chain; its full sequence is MASELAMTAELPTSPLAIEYVNDFDLMKFEVKKEPAEAERLCHRLPAGSLSSTPLSTPCSSVPSSPSFCAPSPGGQPSAGPTAAPLGSKPQLEELYWMSGYQHHLNPEALNLTPEDAVEALIGAPHHHHHHHQSYESFRPQPFGGEELPPAAHHHNAHHHHHHHHLRLEERFSDDQLVSMSVRELNRQLRGFSKEEVIRLKQNRRTLKNRGYAQSCRYKRVQQRHILENEKCQLQSQVEQLKQEVSRLAKERDLYKEKYEKLAARGFPREPSPPAAPKTTAADFFM.

Residues serine 14 and serine 49 each carry the phosphoserine modification. The span at 51 to 85 shows a compositional bias: low complexity; it reads SSTPLSTPCSSVPSSPSFCAPSPGGQPSAGPTAAP. Residues 51 to 87 are disordered; that stretch reads SSTPLSTPCSSVPSSPSFCAPSPGGQPSAGPTAAPLG. 2 positions are modified to phosphothreonine: threonine 53 and threonine 57. Residues serine 61 and serine 65 each carry the phosphoserine modification. A Phosphothreonine modification is found at threonine 113. The segment at 126 to 167 is disordered; it reads HHHHHHHQSYESFRPQPFGGEELPPAAHHHNAHHHHHHHHLR. A compositionally biased stretch (basic residues) spans 152-166; it reads AHHHNAHHHHHHHHL. The interval 199–224 is basic motif; the sequence is RLKQNRRTLKNRGYAQSCRYKRVQQR. In terms of domain architecture, bZIP spans 199–262; sequence RLKQNRRTLK…DLYKEKYEKL (64 aa). The interval 227–248 is leucine-zipper; it reads LENEKCQLQSQVEQLKQEVSRL. The interval 265 to 286 is disordered; that stretch reads RGFPREPSPPAAPKTTAADFFM. Residue serine 272 is modified to Phosphoserine. Positions 277–286 are enriched in low complexity; that stretch reads PKTTAADFFM.

It belongs to the bZIP family. Maf subfamily. Forms homodimers or heterodimers. May interact (via leucine-zipper domain) with MAFB. May interact with FOS and JUN. Interacts with PCAF; this interaction impairs MAFA ubiquitination.

The protein localises to the nucleus. Functionally, transcription factor involved in transcription regulation during lens development, including that of crystallin and filensin/BFSP1 genes. Binds to CRE-type MARE 5'-TGCTGACGTCAGCA-3' and TRE-type MARE 5'-TGCTGACTCAGCA-3' DNA sequences. In Gallus gallus (Chicken), this protein is Transcription factor MafA (MAFA).